Here is a 770-residue protein sequence, read N- to C-terminus: Integrin beta-2 (770 aa).

A signal peptide spans 1 to 22 (MLPQRPQLLLLAGLLSLQSVLS). Glutamine 23 carries the pyrrolidone carboxylic acid modification. Residues 23 to 701 (QECTKYKVST…DMLECVKGPN (679 aa)) are Extracellular-facing. Positions 24–74 (ECTKYKVSTCRDCIESGPSCAWCQKLNFTGQGEPDSTRCDTRAQLLSKGCP) constitute a PSI domain. 28 disulfide bridges follow: cysteine 25/cysteine 43, cysteine 33/cysteine 447, cysteine 36/cysteine 62, cysteine 46/cysteine 73, cysteine 191/cysteine 198, cysteine 246/cysteine 286, cysteine 386/cysteine 400, cysteine 420/cysteine 445, cysteine 449/cysteine 467, cysteine 459/cysteine 470, cysteine 472/cysteine 481, cysteine 483/cysteine 514, cysteine 497/cysteine 512, cysteine 506/cysteine 517, cysteine 519/cysteine 534, cysteine 536/cysteine 559, cysteine 541/cysteine 557, cysteine 549/cysteine 562, cysteine 564/cysteine 573, cysteine 575/cysteine 598, cysteine 582/cysteine 596, cysteine 590/cysteine 601, cysteine 603/cysteine 612, cysteine 615/cysteine 618, cysteine 622/cysteine 663, cysteine 628/cysteine 647, cysteine 631/cysteine 643, and cysteine 671/cysteine 696. Residues asparagine 50 and asparagine 116 are each glycosylated (N-linked (GlcNAc...) asparagine). The VWFA domain occupies 124 to 363 (GYPIDLYYLM…ELIKSAYNKL (240 aa)). Mg(2+)-binding residues include serine 136 and serine 138. Residues serine 138, aspartate 141, aspartate 142, and aspartate 173 each coordinate Ca(2+). Ca(2+) contacts are provided by asparagine 229, aspartate 231, proline 233, and glutamate 234. Mg(2+) is bound at residue glutamate 234. N-linked (GlcNAc...) asparagine glycosylation occurs at asparagine 254. Residues aspartate 264 and glutamate 347 each coordinate Ca(2+). A Cell attachment site motif is present at residues 397-399 (RGD). I-EGF domains are found at residues 449 to 482 (CREA…KNCE), 483 to 535 (CQTH…QFCE), 536 to 574 (CDNV…SACQ), and 575 to 613 (CLKS…PLCI). Residue asparagine 501 is glycosylated (N-linked (GlcNAc...) asparagine). Asparagine 642 carries N-linked (GlcNAc...) asparagine glycosylation. The chain crosses the membrane as a helical span at residues 702–724 (IAAIVGGTVGGVVLVGILLLAIW). Over 725–770 (KALTHLSDLREYHRFEKEKLKSQWNNDNPLFKSATTTVMNPKFAES) the chain is Cytoplasmic. 2 positions are modified to phosphoserine: serine 746 and serine 757. A phosphothreonine mark is found at threonine 759 and threonine 761.

Belongs to the integrin beta chain family. In terms of assembly, heterodimer of an alpha and a beta subunit. The ITGB2 beta subunit associates with the ITGAL, ITGAM, ITGAX or ITGAD alpha subunits. Found in a complex with CD177 and ITGAM/CD11b. Interacts with FGR. Interacts with COPS5 and RANBP9. Interacts with FLNA (via filamin repeats 4, 9, 12, 17, 19, 21, and 23). Interacts with THBD. Post-translationally, both Ser-746 and Ser-757 become phosphorylated when T-cells are exposed to phorbol esters. Phosphorylation on Thr-759 (but not on Ser-757) allows interaction with 14-3-3 proteins.

The protein resides in the cell membrane. Its subcellular location is the membrane raft. Functionally, integrin ITGAL/ITGB2 is a receptor for ICAM1, ICAM2, ICAM3 and ICAM4. Integrin ITGAL/ITGB2 is also a receptor for the secreted form of ubiquitin-like protein ISG15; the interaction is mediated by ITGAL. Integrins ITGAM/ITGB2 and ITGAX/ITGB2 are receptors for the iC3b fragment of the third complement component and for fibrinogen. Integrin ITGAX/ITGB2 recognizes the sequence G-P-R in fibrinogen alpha-chain. Integrin ITGAM/ITGB2 recognizes P1 and P2 peptides of fibrinogen gamma chain. Integrin ITGAM/ITGB2 is also a receptor for factor X. Integrin ITGAD/ITGB2 is a receptor for ICAM3 and VCAM1. Contributes to natural killer cell cytotoxicity. Involved in leukocyte adhesion and transmigration of leukocytes including T-cells and neutrophils. Triggers neutrophil transmigration during lung injury through PTK2B/PYK2-mediated activation. Integrin ITGAL/ITGB2 in association with ICAM3, contributes to apoptotic neutrophil phagocytosis by macrophages. In association with alpha subunit ITGAM/CD11b, required for CD177-PRTN3-mediated activation of TNF primed neutrophils. This chain is Integrin beta-2 (ITGB2), found in Ovis canadensis (Bighorn sheep).